Reading from the N-terminus, the 474-residue chain is ATP synthase subunit beta (474 aa).

Gly155–Thr162 contacts ATP.

This sequence belongs to the ATPase alpha/beta chains family. F-type ATPases have 2 components, CF(1) - the catalytic core - and CF(0) - the membrane proton channel. CF(1) has five subunits: alpha(3), beta(3), gamma(1), delta(1), epsilon(1). CF(0) has three main subunits: a(1), b(2) and c(9-12). The alpha and beta chains form an alternating ring which encloses part of the gamma chain. CF(1) is attached to CF(0) by a central stalk formed by the gamma and epsilon chains, while a peripheral stalk is formed by the delta and b chains.

It localises to the cell inner membrane. It catalyses the reaction ATP + H2O + 4 H(+)(in) = ADP + phosphate + 5 H(+)(out). Produces ATP from ADP in the presence of a proton gradient across the membrane. The catalytic sites are hosted primarily by the beta subunits. The protein is ATP synthase subunit beta of Sorangium cellulosum (strain So ce56) (Polyangium cellulosum (strain So ce56)).